We begin with the raw amino-acid sequence, 185 residues long: Ribosome-recycling factor (185 aa).

It belongs to the RRF family.

The protein localises to the cytoplasm. Its function is as follows. Responsible for the release of ribosomes from messenger RNA at the termination of protein biosynthesis. May increase the efficiency of translation by recycling ribosomes from one round of translation to another. The chain is Ribosome-recycling factor from Listeria monocytogenes serovar 1/2a (strain ATCC BAA-679 / EGD-e).